The chain runs to 292 residues: DCN1-like protein 4 (292 aa).

The tract at residues 43–83 (HQTGSLRSCSSSDCFNKVMPPRKKRRPASGDDLSAKKSRHD) is disordered. Residues 45 to 56 (TGSLRSCSSSDC) are compositionally biased toward polar residues. A Glycyl lysine isopeptide (Lys-Gly) (interchain with G-Cter in SUMO2) cross-link involves residue K95. The DCUN1 domain occupies 101-287 (FSSKRCLEWF…LLDEFVEWYK (187 aa)).

Interacts (via the DCUN1 domain) with the unneddylated cullins: interacts with CUL1, CUL2, CUL3, CUL4A, CUL4B and CUL5; these interactions promote the cullin neddylation and the identity of the cullin dictates the affinity of the interaction. Interacts with RBX1 and RNF7. Interacts with CAND1; this interaction is bridged by cullins such as CUL3 and strongly inhibits the neddylation of CUL3. These CAND-cullin-DCNL complexes can only be neddylated in the presence of a substrate adapter. Interacts (via DCUN1 domain) with UBE2M (N-terminally acetylated form) and probably with UBE2F (N-terminally acetylated form).

Its subcellular location is the nucleus. Contributes to the neddylation of all cullins by transferring NEDD8 from N-terminally acetylated NEDD8-conjugating E2s enzyme to different cullin C-terminal domain-RBX complexes which are necessary for the activation of cullin-RING E3 ubiquitin ligases (CRLs). The sequence is that of DCN1-like protein 4 from Homo sapiens (Human).